The chain runs to 930 residues: Translation initiation factor IF-2 (930 aa).

Residues 31–317 (FVKSASSTVE…RKSKRAKRAE (287 aa)) are disordered. The segment covering 61–78 (PAAGASNGAPAKPSAPGA) has biased composition (low complexity). 2 stretches are compositionally biased toward pro residues: residues 79–99 (RPGP…PAPA) and 108–120 (PAAP…PPAP). A compositionally biased stretch (low complexity) spans 121 to 135 (AASAAPPSAPEAPSA). 2 stretches are compositionally biased toward pro residues: residues 136–158 (RPTP…PAPR) and 178–192 (PRPQ…PRPG). Gly residues predominate over residues 193 to 205 (PGAGGPRPGGGPR). Residues 212 to 242 (NMPPRPVGGPRPGGGPRPGGGPRPGAGPRPT) show a composition bias toward pro residues. Residues 244-301 (GGAGRPGGGGGGNYRGGGAGGGGGAGGAAAGGFRGRPGGGGGRPGQRGGAAGAFGRPG) show a composition bias toward gly residues. Positions 305–314 (KRGRKSKRAK) are enriched in basic residues. Positions 426–598 (FRPPVVTVMG…VVLTADASLD (173 aa)) constitute a tr-type G domain. The G1 stretch occupies residues 435-442 (GHVDHGKT). Residue 435–442 (GHVDHGKT) coordinates GTP. Residues 460-464 (GITQH) form a G2 region. A G3 region spans residues 485–488 (DTPG). Residues 485 to 489 (DTPGH) and 539 to 542 (NKID) each bind GTP. The segment at 539–542 (NKID) is G4. The tract at residues 575–577 (SAK) is G5.

This sequence belongs to the TRAFAC class translation factor GTPase superfamily. Classic translation factor GTPase family. IF-2 subfamily.

The protein resides in the cytoplasm. Its function is as follows. One of the essential components for the initiation of protein synthesis. Protects formylmethionyl-tRNA from spontaneous hydrolysis and promotes its binding to the 30S ribosomal subunits. Also involved in the hydrolysis of GTP during the formation of the 70S ribosomal complex. This is Translation initiation factor IF-2 from Mycolicibacterium gilvum (strain PYR-GCK) (Mycobacterium gilvum (strain PYR-GCK)).